A 1444-amino-acid chain; its full sequence is Protein shortage in chiasmata 1 ortholog (1444 aa).

Residues 1106 to 1117 (SITKSPQISSPQ) show a composition bias toward low complexity. The segment at 1106-1129 (SITKSPQISSPQENRNQISTLSSQ) is disordered.

Belongs to the XPF family. Highly divergent. Interacts with TEX11. Interacts with SPO16.

The protein localises to the chromosome. In terms of biological role, ATPase required during meiosis for the formation of crossover recombination intermediates. Binds DNA: preferentially binds to single-stranded DNA and DNA branched structures. Does not show nuclease activity in vitro, but shows ATPase activity, which is stimulated by the presence of single-stranded DNA. Plays a key role in homologous recombination and crossing-over in meiotic prophase I in male and female germ cells. Required for proper synaptonemal complex assembly and homologous chromosome pairing. Requiref for recruitment TEX11 and MSH4 to recombination intermediates. The sequence is that of Protein shortage in chiasmata 1 ortholog from Homo sapiens (Human).